Here is a 1273-residue protein sequence, read N- to C-terminus: DNA-directed RNA polymerase subunit beta (1273 aa).

Belongs to the RNA polymerase beta chain family. As to quaternary structure, the RNAP catalytic core consists of 2 alpha, 1 beta, 1 beta' and 1 omega subunit. When a sigma factor is associated with the core the holoenzyme is formed, which can initiate transcription.

It catalyses the reaction RNA(n) + a ribonucleoside 5'-triphosphate = RNA(n+1) + diphosphate. In terms of biological role, DNA-dependent RNA polymerase catalyzes the transcription of DNA into RNA using the four ribonucleoside triphosphates as substrates. The chain is DNA-directed RNA polymerase subunit beta from Aster yellows witches'-broom phytoplasma (strain AYWB).